The following is a 285-amino-acid chain: Bifunctional protein FolD (285 aa).

Residues Gly-166–Ser-168, Ser-191, and Thr-232 contribute to the NADP(+) site.

This sequence belongs to the tetrahydrofolate dehydrogenase/cyclohydrolase family. As to quaternary structure, homodimer.

It carries out the reaction (6R)-5,10-methylene-5,6,7,8-tetrahydrofolate + NADP(+) = (6R)-5,10-methenyltetrahydrofolate + NADPH. It catalyses the reaction (6R)-5,10-methenyltetrahydrofolate + H2O = (6R)-10-formyltetrahydrofolate + H(+). Its pathway is one-carbon metabolism; tetrahydrofolate interconversion. Functionally, catalyzes the oxidation of 5,10-methylenetetrahydrofolate to 5,10-methenyltetrahydrofolate and then the hydrolysis of 5,10-methenyltetrahydrofolate to 10-formyltetrahydrofolate. The polypeptide is Bifunctional protein FolD (Chloroflexus aurantiacus (strain ATCC 29366 / DSM 635 / J-10-fl)).